The primary structure comprises 463 residues: Peptidylprolyl isomerase cyp7 (463 aa).

Positions alanine 11 to valine 166 constitute a PPIase cyclophilin-type domain. The tract at residues valine 224 to glutamate 275 is disordered. Residues threonine 232–glutamate 243 are compositionally biased toward polar residues. Positions serine 250–serine 261 are enriched in low complexity. Residues alanine 262–valine 271 are compositionally biased toward polar residues.

Belongs to the cyclophilin-type PPIase family. CWC27 subfamily. In terms of assembly, belongs to the 40S cdc5-associated complex (or cwf complex), a spliceosome sub-complex reminiscent of a late-stage spliceosome composed of the U2, U5 and U6 snRNAs and at least brr2, cdc5, cwf2/prp3, cwf3/syf1, cwf4/syf3, cwf5/ecm2, spp42/cwf6, cwf7/spf27, cwf8, cwf9, cwf10, cwf11, cwf12, prp45/cwf13, cwf14, cwf15, cwf16, cwf17, cwf18, cwf19, cwf20, cwf21, cwf22, cwf23, cwf24, cwf25, cwf26, cyp7/cwf27, cwf28, cwf29/ist3, lea1, msl1, prp5/cwf1, prp10, prp12/sap130, prp17, prp22, sap61, sap62, sap114, sap145, slu7, smb1, smd1, smd3, smf1, smg1 and syf2.

It is found in the cytoplasm. It localises to the nucleus. It carries out the reaction [protein]-peptidylproline (omega=180) = [protein]-peptidylproline (omega=0). PPIases accelerate the folding of proteins. Catalyzes the cis-trans isomerization of proline imidic peptide bonds in oligopeptides. Involved in pre-mRNA splicing. This is Peptidylprolyl isomerase cyp7 (cyp7) from Schizosaccharomyces pombe (strain 972 / ATCC 24843) (Fission yeast).